We begin with the raw amino-acid sequence, 549 residues long: Glucose-6-phosphate isomerase (549 aa).

Glutamate 355 acts as the Proton donor in catalysis. Catalysis depends on residues histidine 387 and lysine 515.

The protein belongs to the GPI family.

Its subcellular location is the cytoplasm. The enzyme catalyses alpha-D-glucose 6-phosphate = beta-D-fructose 6-phosphate. It functions in the pathway carbohydrate biosynthesis; gluconeogenesis. It participates in carbohydrate degradation; glycolysis; D-glyceraldehyde 3-phosphate and glycerone phosphate from D-glucose: step 2/4. Its function is as follows. Catalyzes the reversible isomerization of glucose-6-phosphate to fructose-6-phosphate. The sequence is that of Glucose-6-phosphate isomerase from Pasteurella multocida (strain Pm70).